The following is an 802-amino-acid chain: Acetyl-CoA decarbonylase/synthase complex subunit alpha 1 (802 aa).

C68, C71, C76, and C86 together coordinate [4Fe-4S] cluster. H109 is a binding site for CO. Positions 243, 271, and 310 each coordinate [Ni-4Fe-4S] cluster. 4Fe-4S ferredoxin-type domains are found at residues 395-424 and 435-464; these read DEAL…VDQG and SKLA…INVI. [4Fe-4S] cluster contacts are provided by C405, C408, C411, C415, C444, C447, C450, and C454. [Ni-4Fe-4S] cluster contacts are provided by C512, C541, and C576.

The protein belongs to the Ni-containing carbon monoxide dehydrogenase family. As to quaternary structure, heterotetramer of two alpha and two epsilon subunits. The ACDS complex is made up of alpha, epsilon, beta, gamma and delta subunits with a probable stoichiometry of (alpha(2)epsilon(2))(4)-beta(8)-(gamma(1)delta(1))(8). It depends on [4Fe-4S] cluster as a cofactor. [Ni-4Fe-4S] cluster is required as a cofactor.

It carries out the reaction CO + 2 oxidized [2Fe-2S]-[ferredoxin] + H2O = 2 reduced [2Fe-2S]-[ferredoxin] + CO2 + 2 H(+). Part of the ACDS complex that catalyzes the reversible cleavage of acetyl-CoA, allowing autotrophic growth from CO(2). The alpha-epsilon subcomponent functions as a carbon monoxide dehydrogenase. In Archaeoglobus fulgidus (strain ATCC 49558 / DSM 4304 / JCM 9628 / NBRC 100126 / VC-16), this protein is Acetyl-CoA decarbonylase/synthase complex subunit alpha 1.